A 1409-amino-acid chain; its full sequence is DNA-directed RNA polymerase subunit beta' (1409 aa).

Residues Cys70, Cys72, Cys85, and Cys88 each contribute to the Zn(2+) site. The Mg(2+) site is built by Asp461, Asp463, and Asp465. The Zn(2+) site is built by Cys833, Cys907, Cys914, and Cys917. The interval Glu1389–Ala1409 is disordered.

The protein belongs to the RNA polymerase beta' chain family. As to quaternary structure, the RNAP catalytic core consists of 2 alpha, 1 beta, 1 beta' and 1 omega subunit. When a sigma factor is associated with the core the holoenzyme is formed, which can initiate transcription. Requires Mg(2+) as cofactor. Zn(2+) serves as cofactor.

It carries out the reaction RNA(n) + a ribonucleoside 5'-triphosphate = RNA(n+1) + diphosphate. DNA-dependent RNA polymerase catalyzes the transcription of DNA into RNA using the four ribonucleoside triphosphates as substrates. The sequence is that of DNA-directed RNA polymerase subunit beta' from Pelobacter propionicus (strain DSM 2379 / NBRC 103807 / OttBd1).